We begin with the raw amino-acid sequence, 370 residues long: MEPDRQADIAALDSTLTTVERVLDVDGLRARIEKLEHEASDPQLWDDQARAQRVTSELSHAQGELRRIEELRARLDDLPVLYELAAEEGEGAAEALAEADAELKALRADIEATEVRTLLSGEYDEREALVTIRSGAGGVDAADWAEMLMRMYIRWAEQHKYPVEVFDTSYAEEAGIKSATFAVHAPFAYGTLSVEQGTHRLVRISPFDNQSRRQTSFAEVEVLPVVETTDHIDIPEGDVRVDVYRSSGPGGQSVNTTDSAVRLTHIPTGIVVTCQNEKSQLQNKISAMRVLQAKLLERKRSEERAELDALKGEGGSSWGNQMRSYVLHPYQMVKDLRTEYEVGNPAAVLDGDIDGFLEAGIRWRNRKDDE.

An N5-methylglutamine modification is found at Q252.

This sequence belongs to the prokaryotic/mitochondrial release factor family. Post-translationally, methylated by PrmC. Methylation increases the termination efficiency of RF2.

The protein resides in the cytoplasm. Functionally, peptide chain release factor 2 directs the termination of translation in response to the peptide chain termination codons UGA and UAA. In Mycobacterium avium (strain 104), this protein is Peptide chain release factor 2.